The sequence spans 104 residues: Pyrimidine/purine nucleoside phosphorylase (104 aa).

Belongs to the nucleoside phosphorylase PpnP family.

The catalysed reaction is a purine D-ribonucleoside + phosphate = a purine nucleobase + alpha-D-ribose 1-phosphate. It catalyses the reaction adenosine + phosphate = alpha-D-ribose 1-phosphate + adenine. It carries out the reaction cytidine + phosphate = cytosine + alpha-D-ribose 1-phosphate. The enzyme catalyses guanosine + phosphate = alpha-D-ribose 1-phosphate + guanine. The catalysed reaction is inosine + phosphate = alpha-D-ribose 1-phosphate + hypoxanthine. It catalyses the reaction thymidine + phosphate = 2-deoxy-alpha-D-ribose 1-phosphate + thymine. It carries out the reaction uridine + phosphate = alpha-D-ribose 1-phosphate + uracil. The enzyme catalyses xanthosine + phosphate = alpha-D-ribose 1-phosphate + xanthine. In terms of biological role, catalyzes the phosphorolysis of diverse nucleosides, yielding D-ribose 1-phosphate and the respective free bases. Can use uridine, adenosine, guanosine, cytidine, thymidine, inosine and xanthosine as substrates. Also catalyzes the reverse reactions. The chain is Pyrimidine/purine nucleoside phosphorylase from Hydrogenovibrio crunogenus (strain DSM 25203 / XCL-2) (Thiomicrospira crunogena).